Reading from the N-terminus, the 320-residue chain is ATP-dependent 6-phosphofructokinase (320 aa).

G12 lines the ATP pocket. Position 22-26 (22-26 (RGVVR)) interacts with ADP. ATP contacts are provided by residues 73–74 (RF) and 103–106 (GDGS). D104 is a Mg(2+) binding site. Position 126–128 (126–128 (TID)) interacts with substrate. The Proton acceptor role is filled by D128. R155 provides a ligand contact to ADP. Residues R163 and 170–172 (MGR) each bind substrate. Residues 186-188 (GCE), K212, and 214-216 (KKH) contribute to the ADP site. Substrate-binding positions include E223, R244, and 250–253 (HIQR).

Belongs to the phosphofructokinase type A (PFKA) family. ATP-dependent PFK group I subfamily. Prokaryotic clade 'B1' sub-subfamily. In terms of assembly, homotetramer. It depends on Mg(2+) as a cofactor.

The protein resides in the cytoplasm. The catalysed reaction is beta-D-fructose 6-phosphate + ATP = beta-D-fructose 1,6-bisphosphate + ADP + H(+). The protein operates within carbohydrate degradation; glycolysis; D-glyceraldehyde 3-phosphate and glycerone phosphate from D-glucose: step 3/4. With respect to regulation, allosterically activated by ADP and other diphosphonucleosides, and allosterically inhibited by phosphoenolpyruvate. In terms of biological role, catalyzes the phosphorylation of D-fructose 6-phosphate to fructose 1,6-bisphosphate by ATP, the first committing step of glycolysis. The polypeptide is ATP-dependent 6-phosphofructokinase (Vibrio campbellii (strain ATCC BAA-1116)).